The following is a 200-amino-acid chain: Histone chaperone asf1b (200 aa).

The protein belongs to the ASF1 family. In terms of assembly, interacts with histone H3 and histone H4.

The protein localises to the nucleus. Functionally, histone chaperone that facilitates histone deposition and histone exchange and removal during nucleosome assembly and disassembly. In Xenopus tropicalis (Western clawed frog), this protein is Histone chaperone asf1b (asf1b).